Consider the following 630-residue polypeptide: Sodium-dependent serotonin transporter (630 aa).

At M1–D87 the chain is on the cytoplasmic side. Y47 carries the post-translational modification Phosphotyrosine. Residues F88–N112 form a helical membrane-spanning segment. Residues G94, A96, V97, D98, and N101 each contribute to the Na(+) site. D98 serves as a coordination point for serotonin. The Extracellular segment spans residues G113–G115. Residues A116 to M135 traverse the membrane as a helical segment. Residues E136 to G160 lie on the Cytoplasmic side of the membrane. Residue Y142 is modified to Phosphotyrosine. Residues I161–Y186 form a helical membrane-spanning segment. Residues L187–S252 are Extracellular-facing. C200 and C209 are oxidised to a cystine. 2 N-linked (GlcNAc...) asparagine glycosylation sites follow: N208 and N217. Residues W253 to W271 traverse the membrane as a helical segment. The Cytoplasmic portion of the chain corresponds to K272–S277. At T276 the chain carries Phosphothreonine. A helical transmembrane segment spans residues G278–V297. Over R298–G324 the chain is Extracellular. The helical transmembrane segment at V325 to F347 threads the bilayer. Position 336 (S336) interacts with Na(+). Over A348–D360 the chain is Cytoplasmic. A helical transmembrane segment spans residues A361 to F380. A Na(+)-binding site is contributed by N368. The Extracellular portion of the chain corresponds to T381–T421. The chain crosses the membrane as a helical span at residues F422–L443. Residues L434, D437, and S438 each coordinate Na(+). T439 contributes to the serotonin binding site. Residues E444–E463 lie on the Cytoplasmic side of the membrane. A helical membrane pass occupies residues W464–F483. Residues G484–E494 lie on the Extracellular side of the membrane. Serotonin-binding residues include E494 and Y495. A helical membrane pass occupies residues Y495 to Y516. Residues G517–R538 are Cytoplasmic-facing. The chain crosses the membrane as a helical span at residues I539–M558. Positions 556 and 559 each coordinate serotonin. Topologically, residues S559 to S574 are extracellular. The chain crosses the membrane as a helical span at residues V575–Y595. At R596–V630 the chain is on the cytoplasmic side. Residues T616–D624 are interaction with RAB4A.

Belongs to the sodium:neurotransmitter symporter (SNF) (TC 2.A.22) family. SLC6A4 subfamily. In terms of assembly, monomer or homooligomer. Interacts (via C-terminus) with SCAMP2; the interaction is direct and retains transporter molecules intracellularly. Interacts with filamentous actin and STX1A. Interacts (via the N-terminus) with STX1A (via the H3 domain); this interaction regulates SLC4A6 channel conductance. Interacts with SEC23A, SEC24C and PATJ. Interacts with NOS1; the interaction may diminish the cell surface localization of SERT in the brain and, correspondingly, reduce serotonin reuptake. Interacts with TGFB1I1. Interacts with ITGAV:ITGB3. Interacts (via C-terminus) with ITGB3; this interaction regulates SLC6A4 trafficking. Post-translationally, phosphorylation at Thr-276 increases 5-HT uptake and is required for cGMP-mediated SERT regulation. Expressed in the intestinal crypt epithelial cells (at protein level).

Its subcellular location is the cell membrane. It localises to the endomembrane system. The protein resides in the endosome membrane. The protein localises to the synapse. It is found in the cell junction. Its subcellular location is the focal adhesion. It localises to the cell projection. The protein resides in the neuron projection. It catalyses the reaction serotonin(out) + K(+)(in) + Na(+)(out) + H(+)(in) = serotonin(in) + K(+)(out) + Na(+)(in) + H(+)(out). In terms of biological role, serotonin transporter that cotransports serotonin with one Na(+) ion in exchange for one K(+) ion and possibly one proton in an overall electroneutral transport cycle. Transports serotonin across the plasma membrane from the extracellular compartment to the cytosol thus limiting serotonin intercellular signaling. Essential for serotonin homeostasis in the central nervous system. In the developing somatosensory cortex, acts in glutamatergic neurons to control serotonin uptake and its trophic functions accounting for proper spatial organization of cortical neurons and elaboration of sensory circuits. In the mature cortex, acts primarily in brainstem raphe neurons to mediate serotonin uptake from the synaptic cleft back into the pre-synaptic terminal thus terminating serotonin signaling at the synapse. Modulates mucosal serotonin levels in the gastrointestinal tract through uptake and clearance of serotonin in enterocytes. Required for enteric neurogenesis and gastrointestinal reflexes. Regulates blood serotonin levels by ensuring rapid high affinity uptake of serotonin from plasma to platelets, where it is further stored in dense granules via vesicular monoamine transporters and then released upon stimulation. Mechanistically, the transport cycle starts with an outward-open conformation having Na1(+) and Cl(-) sites occupied. The binding of a second extracellular Na2(+) ion and serotonin substrate leads to structural changes to outward-occluded to inward-occluded to inward-open, where the Na2(+) ion and serotonin are released into the cytosol. Binding of intracellular K(+) ion induces conformational transitions to inward-occluded to outward-open and completes the cycle by releasing K(+) possibly together with a proton bound to Asp-98 into the extracellular compartment. Na1(+) and Cl(-) ions remain bound throughout the transport cycle. Additionally, displays serotonin-induced channel-like conductance for monovalent cations, mainly Na(+) ions. The channel activity is uncoupled from the transport cycle and may contribute to the membrane resting potential or excitability. The polypeptide is Sodium-dependent serotonin transporter (SLC6A4) (Cavia porcellus (Guinea pig)).